Reading from the N-terminus, the 300-residue chain is Delta(7)-sterol 5(6)-desaturase erg31 (300 aa).

Transmembrane regions (helical) follow at residues 33–53 (ISLF…FASL), 78–98 (VLTA…WFLA), and 117–137 (YFLC…YWAH). Residues 123–248 (PLFVMFSDFG…FTTLFDRLGN (126 aa)) form the Fatty acid hydroxylase domain. Positions 137–141 (HRFLH) match the Histidine box-1 motif. Residues 150–154 (HKLHH) carry the Histidine box-2 motif. Residues 180–200 (HLFPFFFPLHKLTYLALFTFV) traverse the membrane as a helical segment. The Histidine box-3 motif lies at 225–229 (HNGHH).

The protein belongs to the sterol desaturase family. Requires Fe cation as cofactor.

The protein localises to the endoplasmic reticulum membrane. It carries out the reaction episterol + 2 Fe(II)-[cytochrome b5] + O2 + 2 H(+) = 5-dehydroepisterol + 2 Fe(III)-[cytochrome b5] + 2 H2O. It functions in the pathway steroid metabolism; ergosterol biosynthesis. In terms of biological role, C-5 sterol desaturase; part of the third module of ergosterol biosynthesis pathway that includes by the late steps of the pathway. Erg31 and erg32 catalyze the introduction of a C-5 double bond in the B ring to produce 5-dehydroepisterol. The third module or late pathway involves the ergosterol synthesis itself through consecutive reactions that mainly occur in the endoplasmic reticulum (ER) membrane. Firstly, the squalene synthase erg9 catalyzes the condensation of 2 farnesyl pyrophosphate moieties to form squalene, which is the precursor of all steroids. Secondly, squalene is converted into lanosterol by the consecutive action of the squalene epoxidase erg1 and the lanosterol synthase erg7. The lanosterol 14-alpha-demethylase erg11/cyp1 catalyzes C14-demethylation of lanosterol to produce 4,4'-dimethyl cholesta-8,14,24-triene-3-beta-ol. In the next steps, a complex process involving various demethylation, reduction and desaturation reactions catalyzed by the C-14 reductase erg24 and the C-4 demethylation complex erg25-erg26-erg27 leads to the production of zymosterol. Erg28 likely functions in the C-4 demethylation complex reaction by tethering erg26 and Erg27 to the endoplasmic reticulum or to facilitate interaction between these proteins. Then, the sterol 24-C-methyltransferase erg6 catalyzes the methyl transfer from S-adenosyl-methionine to the C-24 of zymosterol to form fecosterol. The C-8 sterol isomerase erg2 catalyzes the reaction which results in unsaturation at C-7 in the B ring of sterols and thus converts fecosterol to episterol. The sterol-C5-desaturases erg31 and erg32 then catalyze the introduction of a C-5 double bond in the B ring to produce 5-dehydroepisterol. The C-22 sterol desaturase erg5 further converts 5-dehydroepisterol into ergosta-5,7,22,24(28)-tetraen-3beta-ol by forming the C-22(23) double bond in the sterol side chain. Finally, ergosta-5,7,22,24(28)-tetraen-3beta-ol is substrate of the C-24(28) sterol reductase erg4 to produce ergosterol. In the genus Schizosaccharomyces, a second route exists between lanosterol and fecosterol, via the methylation of lanosterol to eburicol by erg6, followed by C14-demethylation by erg11/cyp1 and C4-demethylation by the demethylation complex erg25-erg26-erg27. This Schizosaccharomyces pombe (strain 972 / ATCC 24843) (Fission yeast) protein is Delta(7)-sterol 5(6)-desaturase erg31.